A 443-amino-acid chain; its full sequence is Histidinol dehydrogenase (443 aa).

Residues tyrosine 133, glutamine 191, and asparagine 214 each contribute to the NAD(+) site. Residues serine 240, glutamine 262, and histidine 265 each contribute to the substrate site. Residues glutamine 262 and histidine 265 each coordinate Zn(2+). Active-site proton acceptor residues include glutamate 329 and histidine 330. Residues histidine 330, aspartate 363, glutamate 417, and histidine 422 each contribute to the substrate site. Residue aspartate 363 coordinates Zn(2+). Residue histidine 422 coordinates Zn(2+).

This sequence belongs to the histidinol dehydrogenase family. Homodimer. Zn(2+) is required as a cofactor.

It carries out the reaction L-histidinol + 2 NAD(+) + H2O = L-histidine + 2 NADH + 3 H(+). It participates in amino-acid biosynthesis; L-histidine biosynthesis; L-histidine from 5-phospho-alpha-D-ribose 1-diphosphate: step 9/9. Its function is as follows. Catalyzes the sequential NAD-dependent oxidations of L-histidinol to L-histidinaldehyde and then to L-histidine. The polypeptide is Histidinol dehydrogenase (Yersinia pestis).